Reading from the N-terminus, the 204-residue chain is Ribosomal RNA small subunit methyltransferase G (204 aa).

S-adenosyl-L-methionine-binding residues include G73, F78, and R139.

Belongs to the methyltransferase superfamily. RNA methyltransferase RsmG family.

The protein localises to the cytoplasm. The catalysed reaction is guanosine(527) in 16S rRNA + S-adenosyl-L-methionine = N(7)-methylguanosine(527) in 16S rRNA + S-adenosyl-L-homocysteine. Functionally, specifically methylates the N7 position of guanine in position 527 of 16S rRNA. In Coxiella burnetii (strain CbuG_Q212) (Coxiella burnetii (strain Q212)), this protein is Ribosomal RNA small subunit methyltransferase G.